Consider the following 639-residue polypeptide: 1-deoxy-D-xylulose-5-phosphate synthase (639 aa).

Thiamine diphosphate is bound by residues His-79 and 120-122 (AHS). A Mg(2+)-binding site is contributed by Asp-151. Thiamine diphosphate is bound by residues 152–153 (GA), Asn-180, Tyr-289, and Glu-371. Asn-180 provides a ligand contact to Mg(2+).

This sequence belongs to the transketolase family. DXPS subfamily. As to quaternary structure, homodimer. Requires Mg(2+) as cofactor. It depends on thiamine diphosphate as a cofactor.

The enzyme catalyses D-glyceraldehyde 3-phosphate + pyruvate + H(+) = 1-deoxy-D-xylulose 5-phosphate + CO2. The protein operates within metabolic intermediate biosynthesis; 1-deoxy-D-xylulose 5-phosphate biosynthesis; 1-deoxy-D-xylulose 5-phosphate from D-glyceraldehyde 3-phosphate and pyruvate: step 1/1. In terms of biological role, catalyzes the acyloin condensation reaction between C atoms 2 and 3 of pyruvate and glyceraldehyde 3-phosphate to yield 1-deoxy-D-xylulose-5-phosphate (DXP). This Rhizorhabdus wittichii (strain DSM 6014 / CCUG 31198 / JCM 15750 / NBRC 105917 / EY 4224 / RW1) (Sphingomonas wittichii) protein is 1-deoxy-D-xylulose-5-phosphate synthase.